The sequence spans 674 residues: MASTTTMRLALFSVLTLLSFHAVVSVTPLHVQHPLDPLTKEEFLAVQTIVQNKYPISNNRLAFHYIGLDDPEKDHVLRYETHPTLVSIPRKIFVVAIINSQTHEILINLRIRSIVSDNIHNGYGFPILSVDEQSLAIKLPLKYPPFIDSVKKRGLNLSEIVCSSFTMGWFGEEKNVRTVRLDCFMKESTVNIYVRPITGITIVADLDLMKIVEYHDRDIEAVPTAENTEYQVSKQSPPFGPKQHSLTSHQPQGPGFQINGHSVSWANWKFHIGFDVRAGIVISLASIYDLEKHKSRRVLYKGYISELFVPYQDPTEEFYFKTFFDSGEFGFGLSTVSLIPNRDCPPHAQFIDTYVHSANGTPILLKNAICVFEQYGNIMWRHTENGIPNESIEESRTEVNLIVRTIVTVGNYDNVIDWEFKASGSIKPSIALSGILEIKGTNIKHKDEIKEDLHGKLVSANSIGIYHDHFYIYYLDFDIDGTHNSFEKTSLKTVRIKDGSSKRKSYWTTETQTAKTESDAKITIGLAPAELVVVNPNIKTAVGNEVGYRLIPAIPAHPLLTEDDYPQIRGAFTNYNVWVTAYNRTEKWAGGLYVDHSRGDDTLAVWTKQNREIVNKDIVMWHVVGIHHVPAQEDFPIMPLLSTSFELRPTNFFERNPVLKTLSPRDVAWPGCSN.

Positions 1 to 25 (MASTTTMRLALFSVLTLLSFHAVVS) are cleaved as a signal peptide. N156 is a glycosylation site (N-linked (GlcNAc...) asparagine). Cysteines 162 and 183 form a disulfide. Positions 226-236 (ENTEYQVSKQS) are enriched in polar residues. The interval 226–251 (ENTEYQVSKQSPPFGPKQHSLTSHQP) is disordered. Residue 323 to 334 (FFDSGEFGFGLS) coordinates substrate. The active-site Proton acceptor is the D325. C344 and C370 form a disulfide bridge. The N-linked (GlcNAc...) asparagine glycan is linked to N389. Residue 409 to 414 (VGNYDN) coordinates substrate. Y412 acts as the Schiff-base intermediate with substrate; via topaquinone in catalysis. A 2',4',5'-topaquinone modification is found at Y412. Residues H467 and H469 each coordinate Cu cation. Mn(2+) is bound by residues D476, F477, D478, D617, and I618. H628 is a binding site for Cu cation.

The protein belongs to the copper/topaquinone oxidase family. In terms of assembly, homodimer. It depends on Cu cation as a cofactor. Mn(2+) is required as a cofactor. The cofactor is L-topaquinone. In terms of processing, topaquinone (TPQ) is generated by copper-dependent autoxidation of a specific tyrosyl residue.

It catalyses the reaction a primary methyl amine + O2 + H2O = an aldehyde + H2O2 + NH4(+). The chain is Primary amine oxidase from Pisum sativum (Garden pea).